Consider the following 380-residue polypeptide: Cytochrome b (380 aa).

Transmembrane regions (helical) follow at residues 33–53, 77–98, 113–133, and 178–198; these read FGSL…FLAM, WLIR…FIHV, WNIG…GYVL, and FFAF…VHLL. The heme b site is built by His-83 and His-97. Positions 182 and 196 each coordinate heme b. His-201 contacts a ubiquinone. 4 helical membrane passes run 226-246, 288-308, 320-340, and 347-367; these read IKDL…VLFF, LGGV…PLLN, LTQF…WIGG, and FTTI…VLMP.

Belongs to the cytochrome b family. In terms of assembly, the cytochrome bc1 complex contains 11 subunits: 3 respiratory subunits (MT-CYB, CYC1 and UQCRFS1), 2 core proteins (UQCRC1 and UQCRC2) and 6 low-molecular weight proteins (UQCRH/QCR6, UQCRB/QCR7, UQCRQ/QCR8, UQCR10/QCR9, UQCR11/QCR10 and a cleavage product of UQCRFS1). This cytochrome bc1 complex then forms a dimer. Requires heme b as cofactor.

It localises to the mitochondrion inner membrane. Its function is as follows. Component of the ubiquinol-cytochrome c reductase complex (complex III or cytochrome b-c1 complex) that is part of the mitochondrial respiratory chain. The b-c1 complex mediates electron transfer from ubiquinol to cytochrome c. Contributes to the generation of a proton gradient across the mitochondrial membrane that is then used for ATP synthesis. The polypeptide is Cytochrome b (MT-CYB) (Thomasomys notatus (Distinguished oldfield mouse)).